We begin with the raw amino-acid sequence, 309 residues long: Porphobilinogen deaminase (309 aa).

Cys-242 bears the S-(dipyrrolylmethanemethyl)cysteine mark.

It belongs to the HMBS family. Monomer. Requires dipyrromethane as cofactor.

It carries out the reaction 4 porphobilinogen + H2O = hydroxymethylbilane + 4 NH4(+). It participates in porphyrin-containing compound metabolism; protoporphyrin-IX biosynthesis; coproporphyrinogen-III from 5-aminolevulinate: step 2/4. Functionally, tetrapolymerization of the monopyrrole PBG into the hydroxymethylbilane pre-uroporphyrinogen in several discrete steps. The protein is Porphobilinogen deaminase of Pseudoalteromonas atlantica (strain T6c / ATCC BAA-1087).